An 836-amino-acid chain; its full sequence is Outer membrane usher protein PapC (836 aa).

A signal peptide spans 1 to 24 (MKDRIPFAVNNITCVILLSLFCNA). Cys814 and Cys832 form a disulfide bridge.

Belongs to the fimbrial export usher family.

The protein localises to the cell outer membrane. In terms of biological role, involved in the export and assembly of pili subunits across the outer membrane. Forms a hexameric ring-shaped pore in the outer bacterial membrane. The 2 nanometer-diameter pore allows the passage of the thin tip fibrillum. As for the rod, it probably unwinds into linear fibers which would therefore be narrow enough to pass through the pore. The polypeptide is Outer membrane usher protein PapC (papC) (Escherichia coli).